We begin with the raw amino-acid sequence, 102 residues long: Secreted RxLR effector protein 61 (102 aa).

The signal sequence occupies residues 1-22; sequence MAFQLRIVQHLLHITFLRLPLA. The short motif at 51-60 is the RxLR-dEER element; the sequence is RRLRQLNEHR.

Belongs to the RxLR effector family.

It localises to the secreted. The protein localises to the host chloroplast envelope. The protein resides in the host cytoplasm. Its subcellular location is the host nucleus. Its function is as follows. Effector that partially suppresses the tobacco programmed cell death induced by cell death-inducing proteins. This chain is Secreted RxLR effector protein 61, found in Plasmopara viticola (Downy mildew of grapevine).